The chain runs to 565 residues: Mitochondrial distribution and morphology protein 34 (565 aa).

Residues 1–195 enclose the SMP-LTD domain; the sequence is MAFNFNWSPL…LPAIIHRLSL (195 aa). Disordered regions lie at residues 207–236, 296–317, and 348–504; these read EDQDQNTNTAGEGPGQDPLASPPQDPVDAL, PSDQGDISGGVTSPLSPALSRT, and STYG…RQLP. The span at 358–370 shows a compositional bias: basic residues; sequence RHSKAHARKRKKR. Basic and acidic residues predominate over residues 371–381; that stretch reads VVDLRRPKQPE. Polar residues predominate over residues 382 to 401; sequence SETASVTDESSFTETTSAPS. 2 stretches are compositionally biased toward basic and acidic residues: residues 446–472 and 483–496; these read LRRDIATEMLRETGESSSEPARRHAEV and IRHEPSRYEGEKQE.

This sequence belongs to the MDM34 family. In terms of assembly, component of the ER-mitochondria encounter structure (ERMES) or MDM complex, composed of mmm1, mdm10, mdm12 and mdm34.

The protein localises to the mitochondrion outer membrane. In terms of biological role, component of the ERMES/MDM complex, which serves as a molecular tether to connect the endoplasmic reticulum (ER) and mitochondria. Components of this complex are involved in the control of mitochondrial shape and protein biogenesis, and function in nonvesicular lipid trafficking between the ER and mitochondria. Mdm34 is required for the interaction of the ER-resident membrane protein mmm1 and the outer mitochondrial membrane-resident beta-barrel protein mdm10. The sequence is that of Mitochondrial distribution and morphology protein 34 from Aspergillus terreus (strain NIH 2624 / FGSC A1156).